The primary structure comprises 1248 residues: Probable serine/threonine-protein kinase DDB_G0278509 (1248 aa).

5 disordered regions span residues 1 to 26 (MSKVIGYIDYGDPDGNEEPSKQNGEY), 40 to 61 (SVNGGYDKDNNNHHHHNQEEDY), 100 to 125 (QSYKLSNSGESMNRSINQSKEEDHLE), 180 to 220 (QNNN…TKNN), and 235 to 338 (SIDS…NNNK). The segment covering 102–117 (YKLSNSGESMNRSINQ) has biased composition (polar residues). The span at 181–216 (NNNNNNSNSNSNSNSNSNNNNNNNNNNNNNNNNNNN) shows a compositional bias: low complexity. LRR repeat units lie at residues 386–407 (SSTELDLSEQELNEFPIFDEKE), 411–432 (GYKIIDLSFNNIKSIPLDAFTN), 435–457 (NLEQLIMFNNNLSDVPSSIEFLK), 458–480 (HLTILDLSHNNLHEICRELGNLS), 481–502 (FLRELYLSNNSLKKFPTTGNLY), 503–524 (NLKKLILDNNQITTIPIECVEP), 527–548 (QLQTLDLSFNKIGTITSSTTTT), 572–593 (NLKQLNLSHNELQEIPSSLRHL), 595–616 (KLHSLSIDYNQISVLPDKVVAS), 619–641 (RLAKLTISNNKIKQLPFAINNLS), 642–663 (SLIELNASNNVIELLPDSICYL), 665–687 (NLKKLNLNNNNLKELPSNIGFLT), and 688–708 (KLVDLQLYNNQISSLPISFLK). The segment at 825-873 (YPFQKLDPIPQSLYSSSNPRSHTESDIQKLKNNDETITTTNSSISTTSS) is disordered. Basic and acidic residues predominate over residues 845–858 (SHTESDIQKLKNND). A compositionally biased stretch (low complexity) spans 860–873 (TITTTNSSISTTSS). The 294-residue stretch at 946-1239 (IQFFNLIGQG…SIYHRLENLM (294 aa)) folds into the Protein kinase domain. ATP is bound by residues 952–960 (IGQGGFSKV) and Lys-973. Asp-1069 acts as the Proton acceptor in catalysis. The segment at 1106–1135 (NNTNNTATSSTTTSSANGANSISNNNNNGT) is disordered.

This sequence belongs to the protein kinase superfamily. TKL Ser/Thr protein kinase family.

It catalyses the reaction L-seryl-[protein] + ATP = O-phospho-L-seryl-[protein] + ADP + H(+). It carries out the reaction L-threonyl-[protein] + ATP = O-phospho-L-threonyl-[protein] + ADP + H(+). In Dictyostelium discoideum (Social amoeba), this protein is Probable serine/threonine-protein kinase DDB_G0278509.